Reading from the N-terminus, the 423-residue chain is MFEIAKKYMPGGVNSPVRAFKSVEMEPIFVKSAKKSKLIDINNKEYIDYIQSWGALILGHAHEEVVEEIKKQAELGTSYGLCHELEVEMARLIVKHIPSVEMVRMVNSGTEAVMSAIRLARAYTNRELIVKFEGCYHGHSDGLLVKAGSGALTFGTPSSKGVTEKIVSNTLVARYNDIESVKELFDKYGENIACVIVEPVAGNMGVVLPKQGFLEGLREITKEYGSLLIFDEVITGFRVSINGAQGYYNVFPDITTLGKIIGGGLPVGAYGGRKEIMELISPQGPVYQAGTLSGNPLTLAAGIKTIKIIENDPDFYSKLDELGKYFEEGIVSALGDFDVKINRIKSMLSFFFSKQEVDSYEKVINSDVEIYKKLFKCLFENGILLPPSPFESLFISSSHTKEDIEKTVYYFEKFSKKLKEGKV.

K259 is subject to N6-(pyridoxal phosphate)lysine.

Belongs to the class-III pyridoxal-phosphate-dependent aminotransferase family. HemL subfamily. Homodimer. It depends on pyridoxal 5'-phosphate as a cofactor.

The protein resides in the cytoplasm. The enzyme catalyses (S)-4-amino-5-oxopentanoate = 5-aminolevulinate. The protein operates within porphyrin-containing compound metabolism; protoporphyrin-IX biosynthesis; 5-aminolevulinate from L-glutamyl-tRNA(Glu): step 2/2. The protein is Glutamate-1-semialdehyde 2,1-aminomutase of Thermosipho africanus (strain TCF52B).